The chain runs to 71 residues: Large ribosomal subunit protein bL31 (71 aa).

Zn(2+) contacts are provided by Cys-16, Cys-18, Cys-37, and Cys-40.

The protein belongs to the bacterial ribosomal protein bL31 family. Type A subfamily. In terms of assembly, part of the 50S ribosomal subunit. The cofactor is Zn(2+).

In terms of biological role, binds the 23S rRNA. The sequence is that of Large ribosomal subunit protein bL31 from Actinobacillus succinogenes (strain ATCC 55618 / DSM 22257 / CCUG 43843 / 130Z).